Reading from the N-terminus, the 223-residue chain is Neurotrophic factor BDNF precursor form (223 aa).

Residues 1-5 (SCMKA) form the signal peptide. Positions 6 to 114 (APMKEVSLRG…AANMSMRVRR (109 aa)) are excised as a propeptide. N-linked (GlcNAc...) asparagine glycosylation is present at Asn-107. Cystine bridges form between Cys-127–Cys-194 and Cys-172–Cys-223.

The protein belongs to the NGF-beta family.

Its subcellular location is the secreted. In terms of biological role, promotes the survival of neuronal populations that are all located either in the central nervous system or directly connected to it. This Ramphotyphlops sp. (strain YPM 13663) (Blind snake) protein is Neurotrophic factor BDNF precursor form (BDNF).